A 620-amino-acid chain; its full sequence is Glutathione-regulated potassium-efflux system protein KefC (620 aa).

Transmembrane regions (helical) follow at residues 4 to 24 (HTLL…PIAV), 26 to 46 (LGLG…PWGL), 54 to 74 (SILH…GLEL), 90 to 110 (GALQ…FLGL), 114 to 134 (VAEL…MQAM), 149 to 169 (FAVL…IPLL), 178 to 198 (LGAF…VVLL), 218 to 238 (VFSA…EEVG), 270 to 290 (GLLL…GTLV), 294 to 314 (LRIL…LWLV), 327 to 347 (WFAV…GAAQ), and 359 to 379 (ALTL…VLLT). Residues 399–518 (QPRVIVAGFG…AGVAMPERET (120 aa)) enclose the RCK N-terminal domain. Positions 599–620 (QGTAEGKHSGEAADEPEVKPSI) are disordered.

Belongs to the monovalent cation:proton antiporter 2 (CPA2) transporter (TC 2.A.37) family. KefC subfamily. Homodimer. Interacts with the regulatory subunit KefF.

Its subcellular location is the cell inner membrane. Functionally, pore-forming subunit of a potassium efflux system that confers protection against electrophiles. Catalyzes K(+)/H(+) antiport. This chain is Glutathione-regulated potassium-efflux system protein KefC, found in Salmonella choleraesuis (strain SC-B67).